The following is a 270-amino-acid chain: Surfeit locus protein 4 homolog (270 aa).

A run of 6 helical transmembrane segments spans residues 65-85 (FLAT…CGMV), 93-113 (IAVG…SILW), 115-135 (FQFL…LAEA), 178-198 (LSVW…LVVL), 206-226 (ALIL…WWTI), and 243-263 (TLSV…GVSM). A Di-lysine motif motif is present at residues 267–270 (KKKW).

It belongs to the SURF4 family.

Its subcellular location is the endoplasmic reticulum membrane. In terms of biological role, endoplasmic reticulum cargo receptor that mediates the export of lipoproteins by recruiting cargos into COPII vesicles to facilitate their secretion. The protein is Surfeit locus protein 4 homolog of Drosophila melanogaster (Fruit fly).